Here is a 160-residue protein sequence, read N- to C-terminus: uncharacterized protein (160 aa).

Cysteine 26, cysteine 28, cysteine 50, and histidine 61 together coordinate Zn(2+). The GRF-type; atypical zinc-finger motif lies at 26–69 (CWCGEEIITFTSKTKENPYRRFYRCAIAMKRENEEHLFKWVDEA).

This is an uncharacterized protein from Arabidopsis thaliana (Mouse-ear cress).